The following is a 612-amino-acid chain: Dihydroxy-acid dehydratase (612 aa).

Asp-81 provides a ligand contact to Mg(2+). Cys-122 lines the [2Fe-2S] cluster pocket. Mg(2+) contacts are provided by Asp-123 and Lys-124. Lys-124 carries the N6-carboxylysine modification. Cys-195 provides a ligand contact to [2Fe-2S] cluster. Glu-491 contacts Mg(2+). Ser-517 serves as the catalytic Proton acceptor.

This sequence belongs to the IlvD/Edd family. In terms of assembly, homodimer. The cofactor is [2Fe-2S] cluster. Mg(2+) serves as cofactor.

The catalysed reaction is (2R)-2,3-dihydroxy-3-methylbutanoate = 3-methyl-2-oxobutanoate + H2O. The enzyme catalyses (2R,3R)-2,3-dihydroxy-3-methylpentanoate = (S)-3-methyl-2-oxopentanoate + H2O. It functions in the pathway amino-acid biosynthesis; L-isoleucine biosynthesis; L-isoleucine from 2-oxobutanoate: step 3/4. It participates in amino-acid biosynthesis; L-valine biosynthesis; L-valine from pyruvate: step 3/4. In terms of biological role, functions in the biosynthesis of branched-chain amino acids. Catalyzes the dehydration of (2R,3R)-2,3-dihydroxy-3-methylpentanoate (2,3-dihydroxy-3-methylvalerate) into 2-oxo-3-methylpentanoate (2-oxo-3-methylvalerate) and of (2R)-2,3-dihydroxy-3-methylbutanoate (2,3-dihydroxyisovalerate) into 2-oxo-3-methylbutanoate (2-oxoisovalerate), the penultimate precursor to L-isoleucine and L-valine, respectively. The polypeptide is Dihydroxy-acid dehydratase (Psychromonas ingrahamii (strain DSM 17664 / CCUG 51855 / 37)).